We begin with the raw amino-acid sequence, 126 residues long: Large ribosomal subunit protein bL12 (126 aa).

The segment covering 36-55 has biased composition (low complexity); it reads APAPAAAPAAGGDQGGAEAA. Positions 36–57 are disordered; the sequence is APAPAAAPAAGGDQGGAEAAEQ.

Belongs to the bacterial ribosomal protein bL12 family. As to quaternary structure, homodimer. Part of the ribosomal stalk of the 50S ribosomal subunit. Forms a multimeric L10(L12)X complex, where L10 forms an elongated spine to which 2 to 4 L12 dimers bind in a sequential fashion. Binds GTP-bound translation factors.

Functionally, forms part of the ribosomal stalk which helps the ribosome interact with GTP-bound translation factors. Is thus essential for accurate translation. The polypeptide is Large ribosomal subunit protein bL12 (Natranaerobius thermophilus (strain ATCC BAA-1301 / DSM 18059 / JW/NM-WN-LF)).